We begin with the raw amino-acid sequence, 710 residues long: Serine/threonine-protein phosphatase PP-Z2 (710 aa).

Residues 1–382 (MGNSGSKQHT…ADGDNGSRTN (382 aa)) form a disordered region. The N-myristoyl glycine moiety is linked to residue Gly-2. The segment covering 15-27 (KKDDHDGDRKKTL) has biased composition (basic and acidic residues). A compositionally biased stretch (low complexity) spans 40–49 (SLKSSRSLRS). 2 positions are modified to phosphoserine: Ser-55 and Ser-71. Composition is skewed to polar residues over residues 62-77 (NVQAQTQPLSRRSSTL) and 95-104 (PNNHYLTSHP). Low complexity-rich tracts occupy residues 105–125 (SSSRRLSSSSRRSSMGNNNNS) and 143–155 (NSTSMHSTSSFNS). The segment covering 160–172 (LTDDDDDRGDDGG) has biased composition (acidic residues). The residue at position 161 (Thr-161) is a Phosphothreonine. 2 positions are modified to phosphoserine: Ser-203 and Ser-224. Residues 247–260 (SNRSNSHASSRKSS) are compositionally biased toward low complexity. Positions 261–273 (FGSTGNTAYSTPL) are enriched in polar residues. Thr-271 is subject to Phosphothreonine. Ser-275 bears the Phosphoserine mark. The span at 291-302 (DNVNGRGTSPIP) shows a compositional bias: polar residues. Ser-310 bears the Phosphoserine mark. Mn(2+) contacts are provided by Asp-454, His-456, Asp-482, and Asn-514. His-515 serves as the catalytic Proton donor. The Mn(2+) site is built by His-563 and His-638.

It belongs to the PPP phosphatase family. PP-Z subfamily. Mn(2+) is required as a cofactor.

The catalysed reaction is O-phospho-L-seryl-[protein] + H2O = L-seryl-[protein] + phosphate. The enzyme catalyses O-phospho-L-threonyl-[protein] + H2O = L-threonyl-[protein] + phosphate. Its function is as follows. Essential for the maintenance of cell size and integrity in response to osmotic stress. The chain is Serine/threonine-protein phosphatase PP-Z2 (PPZ2) from Saccharomyces cerevisiae (strain ATCC 204508 / S288c) (Baker's yeast).